The primary structure comprises 232 residues: Polycomb group RING finger protein 5-B (232 aa).

The RING-type zinc-finger motif lies at 18-57 (CFVCKGYLIKPTTVTECLHTFCKSCIVQHFEDSNDCPKCG). Positions 93 to 104 (QEDEFWRRKESN) are enriched in basic and acidic residues. Residues 93-128 (QEDEFWRRKESNDENGPMCKKRRVDEEDDDKGDGDY) are disordered.

Component of a PRC1-like complex.

The protein resides in the nucleus. Its function is as follows. Component of Polycomb group (PcG) multiprotein complexes; the complex class is required to maintain the transcriptionally repressive state of some genes. This Danio rerio (Zebrafish) protein is Polycomb group RING finger protein 5-B (pcgf5b).